The chain runs to 120 residues: Large ribosomal subunit protein uL18 (120 aa).

This sequence belongs to the universal ribosomal protein uL18 family. In terms of assembly, part of the 50S ribosomal subunit; part of the 5S rRNA/L5/L18/L25 subcomplex. Contacts the 5S and 23S rRNAs.

Its function is as follows. This is one of the proteins that bind and probably mediate the attachment of the 5S RNA into the large ribosomal subunit, where it forms part of the central protuberance. This Rhodopseudomonas palustris (strain HaA2) protein is Large ribosomal subunit protein uL18.